The chain runs to 202 residues: Ribosome maturation factor RimM (202 aa).

The PRC barrel domain occupies 121 to 202; the sequence is ADEYYWVDLI…CITVDWQPDY (82 aa).

Belongs to the RimM family. Binds ribosomal protein uS19.

The protein localises to the cytoplasm. Its function is as follows. An accessory protein needed during the final step in the assembly of 30S ribosomal subunit, possibly for assembly of the head region. Essential for efficient processing of 16S rRNA. May be needed both before and after RbfA during the maturation of 16S rRNA. It has affinity for free ribosomal 30S subunits but not for 70S ribosomes. The sequence is that of Ribosome maturation factor RimM from Polaromonas naphthalenivorans (strain CJ2).